A 540-amino-acid chain; its full sequence is Ribonuclease Y (540 aa).

The chain crosses the membrane as a helical span at residues 4–24 (TILVPVAVAIVSVLVGGCAGY). A KH domain is found at 230–293 (TVSVVNLPND…EIAKRALERL (64 aa)). An HD domain is found at 356 to 449 (VLSHSIEVGK…VVAADTISSA (94 aa)).

This sequence belongs to the RNase Y family.

It is found in the cell membrane. In terms of biological role, endoribonuclease that initiates mRNA decay. This is Ribonuclease Y from Lactobacillus gasseri (strain ATCC 33323 / DSM 20243 / BCRC 14619 / CIP 102991 / JCM 1131 / KCTC 3163 / NCIMB 11718 / NCTC 13722 / AM63).